Here is a 97-residue protein sequence, read N- to C-terminus: Large ribosomal subunit protein uL23 (97 aa).

Belongs to the universal ribosomal protein uL23 family. As to quaternary structure, part of the 50S ribosomal subunit. Contacts protein L29, and trigger factor when it is bound to the ribosome.

Its function is as follows. One of the early assembly proteins it binds 23S rRNA. One of the proteins that surrounds the polypeptide exit tunnel on the outside of the ribosome. Forms the main docking site for trigger factor binding to the ribosome. This chain is Large ribosomal subunit protein uL23, found in Bartonella henselae (strain ATCC 49882 / DSM 28221 / CCUG 30454 / Houston 1) (Rochalimaea henselae).